The chain runs to 855 residues: DNA mismatch repair protein MutS (855 aa).

613–620 (GPNMGGKS) is an ATP binding site.

Belongs to the DNA mismatch repair MutS family.

In terms of biological role, this protein is involved in the repair of mismatches in DNA. It is possible that it carries out the mismatch recognition step. This protein has a weak ATPase activity. This is DNA mismatch repair protein MutS from Azotobacter vinelandii (strain DJ / ATCC BAA-1303).